Consider the following 310-residue polypeptide: Ribosomal protein uL3 glutamine methyltransferase (310 aa).

Belongs to the protein N5-glutamine methyltransferase family. PrmB subfamily.

The enzyme catalyses L-glutaminyl-[ribosomal protein uL3] + S-adenosyl-L-methionine = N(5)-methyl-L-glutaminyl-[ribosomal protein uL3] + S-adenosyl-L-homocysteine + H(+). Its function is as follows. Methylates large ribosomal subunit protein uL3 on a specific glutamine residue. The sequence is that of Ribosomal protein uL3 glutamine methyltransferase from Aliivibrio fischeri (strain ATCC 700601 / ES114) (Vibrio fischeri).